The primary structure comprises 708 residues: Kelch-like protein 11 (708 aa).

An N-terminal signal peptide occupies residues 1-15; it reads MAAAAVAAAAAAAAA. The segment at 47 to 70 is disordered; the sequence is DFGPGPGISAMEASGGDPGPEAED. The BTB domain maps to 94–170; that stretch reads CDITLCFGGA…MYTGRIRVST (77 aa). One can recognise a BACK domain in the interval 205–307; it reads CVAIHSLAHM…KPTYLTRHVK (103 aa). Kelch repeat units lie at residues 360–407, 408–453, 455–501, 503–556, and 610–661; these read VIMV…VTES, YVYV…EVKG, LYSI…AIED, FVYI…VVNS, and DVFI…HVRI. Position 465 is a phosphoserine (Ser-465).

Component of a cullin-RING-based BCR (BTB-CUL3-RBX1) E3 ubiquitin-protein ligase complex. Homodimer. Interacts with CUL3.

In terms of biological role, component of a cullin-RING-based BCR (BTB-CUL3-RBX1) E3 ubiquitin-protein ligase complex that mediates the ubiquitination of target proteins, leading most often to their proteasomal degradation. This chain is Kelch-like protein 11 (KLHL11), found in Homo sapiens (Human).